The sequence spans 610 residues: Glutamine--fructose-6-phosphate aminotransferase [isomerizing] (610 aa).

C2 (nucleophile; for GATase activity) is an active-site residue. The Glutamine amidotransferase type-2 domain maps to 2-221 (CGIVGAVAQR…DGDVVDLQLA (220 aa)). 2 consecutive SIS domains span residues 286–426 (AYKV…TRGR) and 459–600 (WADR…VDKP). K605 serves as the catalytic For Fru-6P isomerization activity.

As to quaternary structure, homodimer.

It localises to the cytoplasm. It carries out the reaction D-fructose 6-phosphate + L-glutamine = D-glucosamine 6-phosphate + L-glutamate. Catalyzes the first step in hexosamine metabolism, converting fructose-6P into glucosamine-6P using glutamine as a nitrogen source. The chain is Glutamine--fructose-6-phosphate aminotransferase [isomerizing] from Bordetella pertussis (strain Tohama I / ATCC BAA-589 / NCTC 13251).